We begin with the raw amino-acid sequence, 303 residues long: Indole-3-glycerol phosphate synthase (303 aa).

It belongs to the TrpC family.

The enzyme catalyses 1-(2-carboxyphenylamino)-1-deoxy-D-ribulose 5-phosphate + H(+) = (1S,2R)-1-C-(indol-3-yl)glycerol 3-phosphate + CO2 + H2O. The protein operates within amino-acid biosynthesis; L-tryptophan biosynthesis; L-tryptophan from chorismate: step 4/5. This is Indole-3-glycerol phosphate synthase from Acaryochloris marina (strain MBIC 11017).